Consider the following 275-residue polypeptide: MPIKTFRPITPTLRFQTALVNDDITTDKPHKPLLVTKLRTGGRRNSGDLTIRHHGGGHKKKLRLIDFKRDKFGVPGRVATIEYDPNRSSRIALISYADGEKRYILQPVGLKVGQTIMSGPEADILVGNALPLKNIPAGTTVHNVELRPGKGAQMVRSAGASAQLVAKEGDYALLKLPSGETRRVLINCMATIGQVGNTDHENVSIGKAGRNRWKGIRPTNRGVTMNPVDHPHGGGEGKTSGGRHPVTPWGQPTRGYKTRNNKRTDTFIVNRRGKK.

Residues arginine 212–arginine 259 are disordered.

Belongs to the universal ribosomal protein uL2 family. Part of the 50S ribosomal subunit. Forms a bridge to the 30S subunit in the 70S ribosome.

Functionally, one of the primary rRNA binding proteins. Required for association of the 30S and 50S subunits to form the 70S ribosome, for tRNA binding and peptide bond formation. It has been suggested to have peptidyltransferase activity; this is somewhat controversial. Makes several contacts with the 16S rRNA in the 70S ribosome. The polypeptide is Large ribosomal subunit protein uL2 (Acidobacterium capsulatum (strain ATCC 51196 / DSM 11244 / BCRC 80197 / JCM 7670 / NBRC 15755 / NCIMB 13165 / 161)).